The sequence spans 538 residues: Putative cysteine ligase BshC (538 aa).

Residues 460–485 are a coiled coil; sequence KINEQIELLERMLKRNIEKKHEVELN.

It belongs to the BshC family.

Its function is as follows. Involved in bacillithiol (BSH) biosynthesis. May catalyze the last step of the pathway, the addition of cysteine to glucosamine malate (GlcN-Mal) to generate BSH. This Bacillus cereus (strain Q1) protein is Putative cysteine ligase BshC.